A 485-amino-acid polypeptide reads, in one-letter code: NADH-quinone oxidoreductase subunit N (485 aa).

The next 14 membrane-spanning stretches (helical) occupy residues 8-28 (LIAL…MLSI), 35-55 (FINT…LYFV), 75-95 (LYIG…YSWL), 104-124 (EFYL…CANH), 125-145 (LASL…LIGY), 159-179 (YMLL…LLYA), 203-223 (ILSG…LVPF), 235-255 (PAPV…AVVI), 271-291 (TVLT…ALTQ), 297-317 (LLGY…VAVQ), 326-346 (VGIY…VVSL), 383-403 (LAGI…VLGV), 406-426 (ELWW…YYYL), and 455-475 (MVVL…QPLI).

This sequence belongs to the complex I subunit 2 family. As to quaternary structure, NDH-1 is composed of 13 different subunits. Subunits NuoA, H, J, K, L, M, N constitute the membrane sector of the complex.

The protein localises to the cell inner membrane. It catalyses the reaction a quinone + NADH + 5 H(+)(in) = a quinol + NAD(+) + 4 H(+)(out). In terms of biological role, NDH-1 shuttles electrons from NADH, via FMN and iron-sulfur (Fe-S) centers, to quinones in the respiratory chain. The immediate electron acceptor for the enzyme in this species is believed to be ubiquinone. Couples the redox reaction to proton translocation (for every two electrons transferred, four hydrogen ions are translocated across the cytoplasmic membrane), and thus conserves the redox energy in a proton gradient. This Photorhabdus laumondii subsp. laumondii (strain DSM 15139 / CIP 105565 / TT01) (Photorhabdus luminescens subsp. laumondii) protein is NADH-quinone oxidoreductase subunit N.